Here is a 282-residue protein sequence, read N- to C-terminus: 3-methyl-2-oxobutanoate hydroxymethyltransferase (282 aa).

2 residues coordinate Mg(2+): D46 and D85. 3-methyl-2-oxobutanoate contacts are provided by residues 46-47, D85, and K115; that span reads DS. E117 contributes to the Mg(2+) binding site. E184 (proton acceptor) is an active-site residue.

This sequence belongs to the PanB family. In terms of assembly, homodecamer; pentamer of dimers. Requires Mg(2+) as cofactor.

The protein localises to the cytoplasm. The enzyme catalyses 3-methyl-2-oxobutanoate + (6R)-5,10-methylene-5,6,7,8-tetrahydrofolate + H2O = 2-dehydropantoate + (6S)-5,6,7,8-tetrahydrofolate. It functions in the pathway cofactor biosynthesis; (R)-pantothenate biosynthesis; (R)-pantoate from 3-methyl-2-oxobutanoate: step 1/2. In terms of biological role, catalyzes the reversible reaction in which hydroxymethyl group from 5,10-methylenetetrahydrofolate is transferred onto alpha-ketoisovalerate to form ketopantoate. The protein is 3-methyl-2-oxobutanoate hydroxymethyltransferase of Alkaliphilus metalliredigens (strain QYMF).